An 85-amino-acid chain; its full sequence is Serine protease inhibitor Kazal-type 7 (85 aa).

The signal sequence occupies residues 1-19 (MKITGGLLLLCTVVYFCSS). The Kazal-like domain maps to 26–85 (SPKKVDCSIYKKYPVVAIPCPITYLPVCGSDYITYGNECHLCTESLKSNGRVQFLHDGSC). Intrachain disulfides connect Cys-32/Cys-67, Cys-45/Cys-64, and Cys-53/Cys-85.

Its subcellular location is the secreted. Its function is as follows. Probable serine protease inhibitor. The protein is Serine protease inhibitor Kazal-type 7 (SPINK7) of Homo sapiens (Human).